A 703-amino-acid polypeptide reads, in one-letter code: tRNA 5-methylaminomethyl-2-thiouridine biosynthesis bifunctional protein MnmC (703 aa).

The tract at residues 1–281 is tRNA (mnm(5)s(2)U34)-methyltransferase; it reads MTAKPQKSCQ…KPAALVAKDH (281 aa). Residues 286-703 form an FAD-dependent cmnm(5)s(2)U34 oxidoreductase region; it reads VGGGLASANL…LRKLLKGKAL (418 aa).

The protein in the N-terminal section; belongs to the methyltransferase superfamily. tRNA (mnm(5)s(2)U34)-methyltransferase family. In the C-terminal section; belongs to the DAO family. FAD serves as cofactor.

The protein localises to the cytoplasm. It carries out the reaction 5-aminomethyl-2-thiouridine(34) in tRNA + S-adenosyl-L-methionine = 5-methylaminomethyl-2-thiouridine(34) in tRNA + S-adenosyl-L-homocysteine + H(+). Its function is as follows. Catalyzes the last two steps in the biosynthesis of 5-methylaminomethyl-2-thiouridine (mnm(5)s(2)U) at the wobble position (U34) in tRNA. Catalyzes the FAD-dependent demodification of cmnm(5)s(2)U34 to nm(5)s(2)U34, followed by the transfer of a methyl group from S-adenosyl-L-methionine to nm(5)s(2)U34, to form mnm(5)s(2)U34. The sequence is that of tRNA 5-methylaminomethyl-2-thiouridine biosynthesis bifunctional protein MnmC from Shewanella sp. (strain MR-7).